The chain runs to 769 residues: TSC22 domain family protein 2 (769 aa).

Disordered regions lie at residues 20-86 (AQVA…TVSP), 224-292 (HGLD…PQPM), 334-353 (AQPG…YPQP), and 520-563 (VPAP…SLPQ). Positions 28–37 (EDTESLDDPD) are enriched in acidic residues. Residues 229–252 (GTDSSLTAVSQLPPSEKMSQPTLA) show a composition bias toward polar residues. The segment covering 269–279 (GGAVAPSSASL) has biased composition (low complexity). Residues 531–541 (SSHTPVSRSSS) show a composition bias toward low complexity. Polar residues predominate over residues 542 to 563 (VIQQVGSPLAQGTHSAPTSLPQ). Positions 691 to 725 (MYAVREEVEVLKEQIKELVERNSLLERENALLKSL) form a coiled coil. The segment covering 726–745 (SNNDQLSQLPAQQANPGSTS) has biased composition (polar residues). The disordered stretch occupies residues 726–769 (SNNDQLSQLPAQQANPGSTSQQQAMIAQPPQPTQPPQQPNVSSA). Residues 754–763 (PPQPTQPPQQ) show a composition bias toward pro residues.

This sequence belongs to the TSC-22/Dip/Bun family. Interacts with NRBP1. Interacts with PKM isoform M2; the interaction results in reduced nuclear levels of PKM isoform M2, leading to repression of cyclin CCND1 transcription and reduced cell growth. Interacts with WDR77. As to expression, expressed in the cortex, medulla and papilla of the kidney. Expressed in the kidney.

Its function is as follows. Reduces the level of nuclear PKM isoform M2 which results in repression of cyclin CCND1 transcription and reduced cell growth. Functionally, may protect kidney cells from hyperosmotic stress. In Mus musculus (Mouse), this protein is TSC22 domain family protein 2.